A 510-amino-acid polypeptide reads, in one-letter code: NAD(P)H-quinone oxidoreductase subunit 2 B, chloroplastic (510 aa).

Transmembrane regions (helical) follow at residues 24-44, 59-79, 99-119, 124-144, 149-169, 183-203, 229-249, 295-315, 323-343, 354-374, 395-415, and 418-438; these read LLLFQGSSIFPECILIFGLIL, WFYFISSTSLVISITALLFRW, IFQFLILLCSTLCIPLSVEYI, MAITEFLLFVLTATLGGMFLC, LITIFVAPECFSLCSYLLSGY, YLLMGGASSSILVHGFSWLYG, ISIALISITVGLGFKLSPAPF, WHLLLEILAILSMILGNLLAI, MLAYSSIGQIGYVIIGIIVGD, YMLFYISMNLGTFACIVLFGL, ALSLALCLLSLGGLPPLAGFF, and LYLFWCGWQAGLYLLVSIGLL.

Belongs to the complex I subunit 2 family. NDH is composed of at least 16 different subunits, 5 of which are encoded in the nucleus.

Its subcellular location is the plastid. It localises to the chloroplast thylakoid membrane. It carries out the reaction a plastoquinone + NADH + (n+1) H(+)(in) = a plastoquinol + NAD(+) + n H(+)(out). The enzyme catalyses a plastoquinone + NADPH + (n+1) H(+)(in) = a plastoquinol + NADP(+) + n H(+)(out). In terms of biological role, NDH shuttles electrons from NAD(P)H:plastoquinone, via FMN and iron-sulfur (Fe-S) centers, to quinones in the photosynthetic chain and possibly in a chloroplast respiratory chain. The immediate electron acceptor for the enzyme in this species is believed to be plastoquinone. Couples the redox reaction to proton translocation, and thus conserves the redox energy in a proton gradient. The protein is NAD(P)H-quinone oxidoreductase subunit 2 B, chloroplastic of Agrostis stolonifera (Creeping bentgrass).